The chain runs to 219 residues: MNSKFIVIEGLEGAGKTTARHIVVETLRSHGVKEVVFTREPGGTPLAEKLRELIKQGMTDEKVTDKAEVLMLYAARVQLVDNVIKPALANGQWVIGDRHDLSSQAYQGGGRGIDQQLLRSLRDTVLGDFRPDLTLYLDLPPAIGLQRARARGELDRIEQESLAFFERTRSRYQELAAEDDSILTIDASQSIEAVSADIQAALQQWLQQQGLLAVVQEPR.

10-17 (GLEGAGKT) contacts ATP.

This sequence belongs to the thymidylate kinase family.

It catalyses the reaction dTMP + ATP = dTDP + ADP. Its function is as follows. Phosphorylation of dTMP to form dTDP in both de novo and salvage pathways of dTTP synthesis. The protein is Thymidylate kinase of Pectobacterium carotovorum subsp. carotovorum (strain PC1).